The primary structure comprises 461 residues: Coagulation factor IX (461 aa).

The first 28 residues, 1 to 28 (MQRVNMIMAESPGLITICLLGYLLSAEC), serve as a signal peptide directing secretion. Positions 29-46 (TVFLDHENANKILNRPKR) are excised as a propeptide. Residues Tyr47, Asn48, Glu53, Glu54, Glu61, Glu63, Glu66, Glu67, Glu72, Glu73, and Glu76 each coordinate Ca(2+). The 46-residue stretch at 47 to 92 (YNSGKLEEFVQGNLERECMEEKCSFEEAREVFENTERTTEFWKQYV) folds into the Gla domain. 4-carboxyglutamate is present on residues Glu53, Glu54, Glu61, Glu63, Glu66, Glu67, Glu72, Glu73, Glu76, Glu79, and Glu82. Mg(2+) is bound at residue Glu61. The cysteines at positions 64 and 69 are disulfide-linked. Glu66 contributes to the Mg(2+) binding site. Glu72 lines the Mg(2+) pocket. Glu76 is a Mg(2+) binding site. Glu82 lines the Ca(2+) pocket. Glu82 contacts Mg(2+). An O-linked (GalNAc...) threonine glycan is attached at Thr85. Residues Glu86, Asp93, Gly94, and Gln96 each coordinate Ca(2+). A 4-carboxyglutamate modification is found at Glu86. Residue Glu86 coordinates Mg(2+). Residues 93–129 (DGDQCESNPCLNGGSCKDDINSYECWCPFGFEGKNCE) form the EGF-like 1; calcium-binding domain. 10 disulfides stabilise this stretch: Cys97–Cys108, Cys102–Cys117, Cys119–Cys128, Cys134–Cys145, Cys141–Cys155, Cys157–Cys170, Cys178–Cys335, Cys252–Cys268, Cys382–Cys396, and Cys407–Cys435. O-linked (Glc...) serine glycosylation occurs at Ser99. A glycan (O-linked (Fuc...) serine) is linked at Ser107. Asp110 and Asp111 together coordinate Ca(2+). Asp110 bears the (3R)-3-hydroxyaspartate mark. A Phosphoserine modification is found at Ser114. Positions 130 to 171 (LDVTCNIKNGRCEQFCKNSADNKVVCSCTEGYRLAENQKSCE) constitute an EGF-like 2 domain. The propeptide at 192–226 (AETVFPDVDYVNSTEAETILDNITQSTQSFNDFTR) is activation peptide. At Tyr201 the chain carries Sulfotyrosine. Phosphoserine is present on Ser204. A Phosphothreonine; alternate modification is found at Thr205. Residue Thr205 is glycosylated (O-linked (GalNAc...) threonine; alternate). An N-linked (GlcNAc...) asparagine glycan is attached at Asn213. 2 O-linked (GalNAc...) threonine glycosylation sites follow: Thr215 and Thr225. The Peptidase S1 domain occupies 227-459 (VVGGEDAKPG…YVNWIKEKTK (233 aa)). The active-site Charge relay system is the His267. Residues Glu281, Asn283, Glu286, Glu288, and Glu291 each coordinate Ca(2+). The Charge relay system role is filled by Asp315. Ser411 functions as the Charge relay system in the catalytic mechanism.

The protein belongs to the peptidase S1 family. In terms of assembly, heterodimer of a light chain and a heavy chain; disulfide-linked. Interacts (inactive and activated) with F11 (activated) in calcium-dependent manner. Interacts with SERPINC1. In terms of processing, activated by factor XIa, which excises the activation peptide. The propeptide can also be removed by snake venom protease. Post-translationally, the iron and 2-oxoglutarate dependent 3-hydroxylation of aspartate and asparagine is (R) stereospecific within EGF domains. Activated by coagulation factor VIIa-tissue factor (F7-F3) complex in calcium-dependent manner. Predominantly O-glucosylated at Ser-99 by POGLUT1 in vitro.

It is found in the secreted. The catalysed reaction is Selective cleavage of Arg-|-Ile bond in factor X to form factor Xa.. Its function is as follows. Factor IX is a vitamin K-dependent plasma protein that participates in the intrinsic pathway of blood coagulation by converting factor X to its active form in the presence of Ca(2+) ions, phospholipids, and factor VIIIa. The sequence is that of Coagulation factor IX (F9) from Pan troglodytes (Chimpanzee).